The primary structure comprises 347 residues: Holliday junction branch migration complex subunit RuvB (347 aa).

Positions 1–182 are large ATPase domain (RuvB-L); sequence MSAQNPVLTP…FGIPVRLSFY (182 aa). ATP contacts are provided by residues Leu-21, Arg-22, Gly-63, Lys-66, Thr-67, Thr-68, 129–131, Arg-172, Tyr-182, and Arg-219; that span reads EDF. Thr-67 lines the Mg(2+) pocket. The segment at 183 to 253 is small ATPAse domain (RuvB-S); it reads TVEELELIVR…IADEALTRLL (71 aa). Positions 256–347 are head domain (RuvB-H); it reads NMGLDQLDTR…QFRLTLEDDD (92 aa). Residues Arg-292, Arg-311, and Arg-316 each contribute to the DNA site.

The protein belongs to the RuvB family. In terms of assembly, homohexamer. Forms an RuvA(8)-RuvB(12)-Holliday junction (HJ) complex. HJ DNA is sandwiched between 2 RuvA tetramers; dsDNA enters through RuvA and exits via RuvB. An RuvB hexamer assembles on each DNA strand where it exits the tetramer. Each RuvB hexamer is contacted by two RuvA subunits (via domain III) on 2 adjacent RuvB subunits; this complex drives branch migration. In the full resolvosome a probable DNA-RuvA(4)-RuvB(12)-RuvC(2) complex forms which resolves the HJ.

It is found in the cytoplasm. It catalyses the reaction ATP + H2O = ADP + phosphate + H(+). In terms of biological role, the RuvA-RuvB-RuvC complex processes Holliday junction (HJ) DNA during genetic recombination and DNA repair, while the RuvA-RuvB complex plays an important role in the rescue of blocked DNA replication forks via replication fork reversal (RFR). RuvA specifically binds to HJ cruciform DNA, conferring on it an open structure. The RuvB hexamer acts as an ATP-dependent pump, pulling dsDNA into and through the RuvAB complex. RuvB forms 2 homohexamers on either side of HJ DNA bound by 1 or 2 RuvA tetramers; 4 subunits per hexamer contact DNA at a time. Coordinated motions by a converter formed by DNA-disengaged RuvB subunits stimulates ATP hydrolysis and nucleotide exchange. Immobilization of the converter enables RuvB to convert the ATP-contained energy into a lever motion, pulling 2 nucleotides of DNA out of the RuvA tetramer per ATP hydrolyzed, thus driving DNA branch migration. The RuvB motors rotate together with the DNA substrate, which together with the progressing nucleotide cycle form the mechanistic basis for DNA recombination by continuous HJ branch migration. Branch migration allows RuvC to scan DNA until it finds its consensus sequence, where it cleaves and resolves cruciform DNA. This is Holliday junction branch migration complex subunit RuvB from Allorhizobium ampelinum (strain ATCC BAA-846 / DSM 112012 / S4) (Agrobacterium vitis (strain S4)).